Reading from the N-terminus, the 84-residue chain is Large ribosomal subunit protein eL34 (84 aa).

The protein belongs to the eukaryotic ribosomal protein eL34 family.

The polypeptide is Large ribosomal subunit protein eL34 (ribL34e) (Pyrobaculum aerophilum (strain ATCC 51768 / DSM 7523 / JCM 9630 / CIP 104966 / NBRC 100827 / IM2)).